The primary structure comprises 105 residues: Phosphoribosyl-AMP cyclohydrolase (105 aa).

Position 72 (D72) interacts with Mg(2+). Zn(2+) is bound at residue C73. The Mg(2+) site is built by D74 and D76. C89 and C96 together coordinate Zn(2+).

The protein belongs to the PRA-CH family. Homodimer. The cofactor is Mg(2+). It depends on Zn(2+) as a cofactor.

Its subcellular location is the cytoplasm. It catalyses the reaction 1-(5-phospho-beta-D-ribosyl)-5'-AMP + H2O = 1-(5-phospho-beta-D-ribosyl)-5-[(5-phospho-beta-D-ribosylamino)methylideneamino]imidazole-4-carboxamide. Its pathway is amino-acid biosynthesis; L-histidine biosynthesis; L-histidine from 5-phospho-alpha-D-ribose 1-diphosphate: step 3/9. Catalyzes the hydrolysis of the adenine ring of phosphoribosyl-AMP. The sequence is that of Phosphoribosyl-AMP cyclohydrolase from Listeria innocua serovar 6a (strain ATCC BAA-680 / CLIP 11262).